The chain runs to 184 residues: Cysteine-rich atrial secretory protein (184 aa).

The N-terminal stretch at 1-26 is a signal peptide; sequence MATFQAHFFAAVMCVGVLGLSKLCGA. Cystine bridges form between Cys29–Cys34, Cys65–Cys111, Cys75–Cys82, Cys123–Cys155, and Cys135–Cys144. An N-linked (GlcNAc...) asparagine glycan is attached at Asn74.

In terms of processing, N-glycosylated. Highly expressed in atrium. Moderately expressed in the pericardium, pulmonary vein, nephridium, arteria anterior, ovotestis and connective tissue. Low expression found in intestine, lung plexus, diaphragm, subesophageal ganglion, ventricle and digestive gland. Very low expression found in columellar retractor, pedal nerves and cerebral ganglion. Not expressed in hemocytes.

The protein resides in the secreted. This chain is Cysteine-rich atrial secretory protein, found in Achatina achatina (Giant Ghana snail).